Consider the following 251-residue polypeptide: Exotoxin type A (251 aa).

Residues Met-1–Ala-30 form the signal peptide. Cys-117 and Cys-128 are oxidised to a cystine.

This sequence belongs to the staphylococcal/streptococcal toxin family.

Causative agent of the symptoms associated with scarlet fever, have been associated with streptococcal toxic shock-like disease and may play a role in the early events of rheumatic fever. In Streptococcus pyogenes serotype M18 (strain MGAS8232), this protein is Exotoxin type A (speA).